The primary structure comprises 123 residues: Acidic phospholipase A2 (123 aa).

Cystine bridges form between cysteine 26–cysteine 116, cysteine 28–cysteine 44, cysteine 43–cysteine 95, cysteine 49–cysteine 123, cysteine 50–cysteine 88, cysteine 57–cysteine 81, and cysteine 75–cysteine 86. Positions 27, 29, and 31 each coordinate Ca(2+). Residue histidine 47 is part of the active site. Aspartate 48 is a Ca(2+) binding site. Aspartate 89 is a catalytic residue.

Belongs to the phospholipase A2 family. Group II subfamily. D49 sub-subfamily. In terms of assembly, homodimer. The cofactor is Ca(2+). As to expression, expressed by the venom gland.

Its subcellular location is the secreted. The enzyme catalyses a 1,2-diacyl-sn-glycero-3-phosphocholine + H2O = a 1-acyl-sn-glycero-3-phosphocholine + a fatty acid + H(+). In terms of biological role, snake venom phospholipase A2 (PLA2) that inhibits ADP-induced platelet aggregation. PLA2 catalyzes the calcium-dependent hydrolysis of the 2-acyl groups in 3-sn-phosphoglycerides. This chain is Acidic phospholipase A2, found in Deinagkistrodon acutus (Hundred-pace snake).